Consider the following 1467-residue polypeptide: Helicase ARIP4 (1467 aa).

Disordered stretches follow at residues 1-150 (MSDE…YAAP) and 186-234 (DSSS…GGTH). Acidic residues predominate over residues 11–49 (PDLDPDVELEDAEEEEEEEEVAVEECDRDDEEDLLDDPS). The span at 72-82 (TSTTSSQSEPS) shows a compositional bias: low complexity. Residues 100-115 (KKRAQKPSHMRRNIRK) show a composition bias toward basic residues. Glycyl lysine isopeptide (Lys-Gly) (interchain with G-Cter in SUMO2) cross-links involve residues Lys-115 and Lys-127. Basic and acidic residues-rich tracts occupy residues 133–147 (ELER…RKDY) and 192–201 (EDEKSSRDEV). A Glycyl lysine isopeptide (Lys-Gly) (interchain with G-Cter in SUMO2) cross-link involves residue Lys-272. In terms of domain architecture, Helicase ATP-binding spans 292–512 (RFKTSSGFGC…WCMVDFVRPD (221 aa)). Residue 305–312 (HSMGLGKT) coordinates ATP. Positions 463 to 466 (DEGH) match the DEAH box motif. The LXXLL motif 1 signature appears at 551 to 555 (LHSLL). A disordered region spans residues 649-673 (GSAGTSARCPPQGTKGKGEDSTLAS). Residues Lys-665, Lys-682, Lys-759, Lys-901, Lys-1014, and Lys-1018 each participate in a glycyl lysine isopeptide (Lys-Gly) (interchain with G-Cter in SUMO2) cross-link. The 169-residue stretch at 728–896 (HLIEESVKLG…RVVDDLNPML (169 aa)) folds into the Helicase C-terminal domain. Residues 1120 to 1171 (RATGKPKVPEDGRMAASGSQGPSCESTSNGRHSASSPKAPDPEGLARPVSPD) are disordered. Positions 1136–1155 (SGSQGPSCESTSNGRHSASS) are enriched in polar residues. Phosphoserine is present on residues Ser-1169 and Ser-1172. Disordered regions lie at residues 1184 to 1221 (DVAA…TALG) and 1247 to 1284 (PVLD…VQPY). Thr-1260 is modified (phosphothreonine). The short motif at 1329-1333 (LSNLL) is the LXXLL motif 2 element. The segment at 1445 to 1467 (AEVGFSSNDDEDKDDDVIEVTGK) is disordered. The segment covering 1452–1467 (NDDEDKDDDVIEVTGK) has biased composition (acidic residues).

This sequence belongs to the SNF2/RAD54 helicase family. In terms of assembly, interacts with AR via its N-terminus. Interacts with DYRK1A. Binds DNA and mononucleosomes, but does not seem to form large multiprotein complexes. In terms of processing, sumoylated.

It is found in the nucleus. The catalysed reaction is ATP + H2O = ADP + phosphate + H(+). Its activity is regulated as follows. Enzyme activity is enhanced by dsDNA (double-stranded DNA) and ssDNA (single-stranded DNA). In terms of biological role, DNA helicase that modulates androgen receptor (AR)-dependent transactivation in a promoter-dependent manner. Not able to remodel mononucleosomes in vitro. In Homo sapiens (Human), this protein is Helicase ARIP4 (RAD54L2).